The sequence spans 364 residues: Chorismate synthase (364 aa).

Positions methionine 41–arginine 60 are disordered. NADP(+) contacts are provided by arginine 48 and arginine 54. Residues arginine 125–serine 127, asparagine 238–alanine 239, glycine 278, lysine 293–serine 297, and arginine 319 each bind FMN.

The protein belongs to the chorismate synthase family. In terms of assembly, homotetramer. FMNH2 serves as cofactor.

The enzyme catalyses 5-O-(1-carboxyvinyl)-3-phosphoshikimate = chorismate + phosphate. The protein operates within metabolic intermediate biosynthesis; chorismate biosynthesis; chorismate from D-erythrose 4-phosphate and phosphoenolpyruvate: step 7/7. Catalyzes the anti-1,4-elimination of the C-3 phosphate and the C-6 proR hydrogen from 5-enolpyruvylshikimate-3-phosphate (EPSP) to yield chorismate, which is the branch point compound that serves as the starting substrate for the three terminal pathways of aromatic amino acid biosynthesis. This reaction introduces a second double bond into the aromatic ring system. The sequence is that of Chorismate synthase from Shewanella baltica (strain OS185).